The primary structure comprises 299 residues: N-acetylmuramic acid 6-phosphate etherase (299 aa).

Positions 55–218 constitute an SIS domain; that stretch reads CINCLEKNGR…STTVMVKMGK (164 aa). The Proton donor role is filled by Glu-83. The active site involves Glu-114.

Belongs to the GCKR-like family. MurNAc-6-P etherase subfamily. In terms of assembly, homodimer.

The catalysed reaction is N-acetyl-D-muramate 6-phosphate + H2O = N-acetyl-D-glucosamine 6-phosphate + (R)-lactate. It functions in the pathway amino-sugar metabolism; N-acetylmuramate degradation. Specifically catalyzes the cleavage of the D-lactyl ether substituent of MurNAc 6-phosphate, producing GlcNAc 6-phosphate and D-lactate. The protein is N-acetylmuramic acid 6-phosphate etherase of Pseudothermotoga lettingae (strain ATCC BAA-301 / DSM 14385 / NBRC 107922 / TMO) (Thermotoga lettingae).